A 472-amino-acid polypeptide reads, in one-letter code: Keratin, type I cytoskeletal 14 (472 aa).

Residues 1–114 form a head region; that stretch reads MTTCSRQFTS…AGGDGLLVGS (114 aa). The interval 115–150 is coil 1A; it reads EKVTMQNLNDRLASYLDKVRALEEANADLEVKIRDW. In terms of domain architecture, IF rod spans 115 to 426; the sequence is EKVTMQNLND…RLLEGEDAHL (312 aa). A linker 1 region spans residues 151-168; it reads YQRQRPAEIKDYSPYFKT. Positions 169-260 are coil 1B; sequence IEDLRNKILT…KNHEEEMNAL (92 aa). A linker 12 region spans residues 261-283; the sequence is RGQVGGDVNVEMDAAPGVDLSRI. Residues 284–422 are coil 2; sequence LNEMRDQYEK…ATYRRLLEGE (139 aa). The segment at 423-472 is tail; it reads DAHLSSSQFSSGSQSSRDVTSSSRQIRTKVMDVHDGKVVSTHEQVLRTKN. Residues 425 to 472 form an interaction with Type I keratins and keratin filaments region; sequence HLSSSQFSSGSQSSRDVTSSSRQIRTKVMDVHDGKVVSTHEQVLRTKN. Residues 426-472 are disordered; that stretch reads LSSSQFSSGSQSSRDVTSSSRQIRTKVMDVHDGKVVSTHEQVLRTKN. The span at 427–445 shows a compositional bias: low complexity; sequence SSSQFSSGSQSSRDVTSSS. Position 435 is a phosphoserine (S435).

It belongs to the intermediate filament family. In terms of assembly, heterotetramer of two type I and two type II keratins. Forms a disulfide-linked heterodimer (via 2B domains) with KRT5 (via 2B domains). Forms a heterodimer with KRT1; the interaction is more abundant in the absence of KRT5. Interacts with PLEC isoform 1C, when in a heterodimer with KRT5. Interacts with TRADD and with keratin filaments. Associates with other type I keratins. Interacts with EPPK1. Interacts with KLHL24. Interacts with PKP1 (via N-terminus) and PKP2. In terms of processing, a disulfide bond is formed between rather than within filaments and promotes the formation of a keratin filament cage around the nucleus. Ubiquitinated by the BCR(KLHL24) E3 ubiquitin ligase complex. As to expression, expressed in the corneal epithelium (at protein level). Detected in the basal layer, lowered within the more apically located layers specifically in the stratum spinosum, stratum granulosum but is not detected in stratum corneum. Strongly expressed in the outer root sheath of anagen follicles but not in the germinative matrix, inner root sheath or hair. Found in keratinocytes surrounding the club hair during telogen.

Its subcellular location is the cytoplasm. The protein localises to the nucleus. The nonhelical tail domain is involved in promoting KRT5-KRT14 filaments to self-organize into large bundles and enhances the mechanical properties involved in resilience of keratin intermediate filaments in vitro. The polypeptide is Keratin, type I cytoskeletal 14 (KRT14) (Homo sapiens (Human)).